A 287-amino-acid polypeptide reads, in one-letter code: Oxaloacetate decarboxylase (287 aa).

S50 lines the substrate pocket. Mg(2+) is bound at residue D88. Residues R159 and H235 each coordinate substrate.

It belongs to the isocitrate lyase/PEP mutase superfamily. Oxaloacetate decarboxylase family. As to quaternary structure, homotetramer; dimer of dimers. The cofactor is Mg(2+).

The enzyme catalyses oxaloacetate + H(+) = pyruvate + CO2. Catalyzes the decarboxylation of oxaloacetate into pyruvate. Seems to play a role in maintaining cellular concentrations of bicarbonate and pyruvate. The protein is Oxaloacetate decarboxylase of Chromohalobacter salexigens (strain ATCC BAA-138 / DSM 3043 / CIP 106854 / NCIMB 13768 / 1H11).